Reading from the N-terminus, the 336-residue chain is Glucan endo-1,3-beta-glucosidase A (336 aa).

A signal peptide spans 1-23 (MAFLSSLLASLLLVGLLIQITGA). A Pyrrolidone carboxylic acid modification is found at Q24. The active-site Proton donor is the E118. Catalysis depends on E257, which acts as the Nucleophile.

Belongs to the glycosyl hydrolase 17 family.

The protein resides in the secreted. It is found in the extracellular space. The enzyme catalyses Hydrolysis of (1-&gt;3)-beta-D-glucosidic linkages in (1-&gt;3)-beta-D-glucans.. Its function is as follows. Implicated in the defense of plants against pathogens. The sequence is that of Glucan endo-1,3-beta-glucosidase A from Solanum lycopersicum (Tomato).